Consider the following 470-residue polypeptide: Iron-sulfur cluster assembly SufBD family protein ABCI9 (470 aa).

It belongs to the iron-sulfur cluster assembly SufBD family.

The chain is Iron-sulfur cluster assembly SufBD family protein ABCI9 (ABCI9) from Arabidopsis thaliana (Mouse-ear cress).